Consider the following 137-residue polypeptide: Large ribosomal subunit protein uL16c (137 aa).

Residues 1–17 (MLSPKKTRFRRQHRGRM) are compositionally biased toward basic residues. The interval 1-21 (MLSPKKTRFRRQHRGRMKGLS) is disordered.

The protein belongs to the universal ribosomal protein uL16 family. As to quaternary structure, part of the 50S ribosomal subunit.

It is found in the plastid. The protein is Large ribosomal subunit protein uL16c of Cuscuta obtusiflora (Peruvian dodder).